We begin with the raw amino-acid sequence, 54 residues long: Large ribosomal subunit protein uL15 (54 aa).

Over residues 1-30 (MPSRLRXTRKLRGHVSHGHGRIGKHRKHPG) the composition is skewed to basic residues. Positions 1-42 (MPSRLRXTRKLRGHVSHGHGRIGKHRKHPGGRGNAGGMHHHR) are disordered. His-39 carries the post-translational modification (3S)-3-hydroxyhistidine. At Lys-47 the chain carries N6-acetyllysine.

This sequence belongs to the universal ribosomal protein uL15 family. Component of the large ribosomal subunit. Hydroxylated on His-39 by MINA.

It is found in the cytoplasm. Component of the large ribosomal subunit. The ribosome is a large ribonucleoprotein complex responsible for the synthesis of proteins in the cell. In Sus scrofa (Pig), this protein is Large ribosomal subunit protein uL15 (RPL27A).